The primary structure comprises 416 residues: Glutamate dehydrogenase A2 (416 aa).

Residue lysine 105 is part of the active site.

The protein belongs to the Glu/Leu/Phe/Val dehydrogenases family. As to quaternary structure, homohexamer.

In Halobacterium salinarum (strain ATCC 700922 / JCM 11081 / NRC-1) (Halobacterium halobium), this protein is Glutamate dehydrogenase A2 (gdhA2).